The sequence spans 226 residues: Cytidylate kinase (226 aa).

Residue 10-18 coordinates ATP; sequence GPASSGKST.

This sequence belongs to the cytidylate kinase family. Type 1 subfamily.

It localises to the cytoplasm. It carries out the reaction CMP + ATP = CDP + ADP. The catalysed reaction is dCMP + ATP = dCDP + ADP. The chain is Cytidylate kinase from Streptococcus pyogenes serotype M28 (strain MGAS6180).